A 256-amino-acid chain; its full sequence is 3-isopropylmalate dehydratase small subunit 2 (256 aa).

The transit peptide at 1–59 (MAYSLPTFPQALPCSSTKTSSSLATFRSPFLRFNGSTSLIPSSISITSRGTSSPTIIPR) directs the protein to the chloroplast.

This sequence belongs to the LeuD family. In terms of assembly, heterodimer of the large LEUC/IIL1 subunit and the small LEUD (SSU1, SSU2 or SSU3) subunits. As to expression, expressed in vascular bundles of roots, cotyledons and rosette leaves. Expressed in stem vascular bundles which branche off into lateral inflorescences. Expressed in connective tissues in anthers. In young seedlings, expressed in cotyledon epidermal cells and vasculare bundles. In hypocotyls, expressed in parenchyma cells surrounding the vasculature and further peripheral cells. In seedling roots, expressed in cells along the vasculature. In roots of adult plants, expressed in cells closely associated with the stele. In flowering stalks, expressed in parenchyma cells associated with the phloem or the xylem. Expressed in the vasculature of sepals and petals.

Its subcellular location is the plastid. It is found in the chloroplast stroma. The enzyme catalyses (2R,3S)-3-isopropylmalate = (2S)-2-isopropylmalate. It catalyses the reaction a 2-(omega-methylsulfanyl)alkylmalate = a 2-(omega-methylsulfanyl)alkylmaleate + H2O. It carries out the reaction 2-(3-methylsulfanyl)propylmalate = 2-(2-methylsulfanyl)propylmaleate + H2O. The catalysed reaction is a 3-(omega-methylsulfanyl)alkylmalate = a 2-(omega-methylsulfanyl)alkylmaleate + H2O. The enzyme catalyses 2-(2-methylsulfanyl)ethylmalate = 2-(2-methylsulfanyl)ethylmaleate + H2O. It catalyses the reaction 3-(2-methylsulfanyl)ethylmalate = 2-(2-methylsulfanyl)ethylmaleate + H2O. It carries out the reaction 3-(3-methylsulfanyl)propylmalate = 2-(2-methylsulfanyl)propylmaleate + H2O. The protein operates within amino-acid biosynthesis; L-leucine biosynthesis; L-leucine from 3-methyl-2-oxobutanoate: step 2/4. Functionally, catalyzes the isomerization between 2-isopropylmalate and 3-isopropylmalate, via the formation of 2-isopropylmaleate. Functions redundantly with LEUD2 in the methionine chain elongation pathway of aliphatic glucosinolate formation. The polypeptide is 3-isopropylmalate dehydratase small subunit 2 (Arabidopsis thaliana (Mouse-ear cress)).